Consider the following 411-residue polypeptide: G1/S-specific cyclin pas1 (411 aa).

2 disordered regions span residues 210-253 (LKNQ…PSVL) and 307-326 (SLSK…VGVY). Positions 218–252 (PSSSPQTTQDSSPILTMAPSTPVSVGSTPPSTPSV) are enriched in low complexity.

This sequence belongs to the cyclin family.

In terms of biological role, essential for the control of the cell cycle at the G1/S (start) transition. Interacts with the pef1 protein kinase. The pef1/pas1 complex activates the res2/cdc10 complex. The sequence is that of G1/S-specific cyclin pas1 (pas1) from Schizosaccharomyces pombe (strain 972 / ATCC 24843) (Fission yeast).